The following is a 456-amino-acid chain: MPPSKDQPNILRGPGDYEVTTRVHNDTYPEIDPRLLNLQGKSVFVTGGSRGLGRSMALSFAKAGVSKIAVGARSSLESLAKEIAEACVNPPEFLPVKLDVTDEASVAAAATEVGRAFGQLNVLVNNAGILGKYGLIADSDPEEWWEVLNVNLRGPYLVTRAFVPLLLKASKDDIRYIVNVCSVGAHLTNPTLSSYQVSKNALLKLTTLTNAEYGPGVITFAIHPGNSPTDIMGGPEAIPPHHKHVFVETPELSGDSVVFLVSKRREWLGGRYINCTWDLPELVSKEAEICIPVGLYQAKEYVDIPFNGLRPEIDTAFQGRKQRTPEQARRAQLAKYNVVKGGMDNRRDSQIFIRIKRSTKHNPRLVRLVGNKSRPATSGICRVDFFDCTAQKQRDKAQWQSLKLSKAQVTGSVVTHLTQILSGNSQRTAGIQRARELGQIIWPLAAEQSDSGNSLP.

Valine 45, aspartate 99, asparagine 126, arginine 160, tyrosine 195, lysine 199, and threonine 229 together coordinate NADP(+). Residue tyrosine 195 is the Proton donor of the active site. Residue lysine 199 is the Lowers pKa of active site Tyr of the active site.

It belongs to the short-chain dehydrogenases/reductases (SDR) family.

It participates in secondary metabolite biosynthesis. Functionally, short chain dehydrogenase; part of the gene cluster that mediates the biosynthesis of azaterrilone A and other azaphilones, a class of fungal metabolites characterized by a highly oxygenated pyrano-quinone bicyclic core and exhibiting a broad range of bioactivities. The first step of the pathway begins with the non-reducing polyketide synthase tazA that assembles one acetyl-CoA starter unit, five malonyl-CoA units, and catalyzes a series of Claisen condensations, methylation, PT-mediated cyclization, and finally releases the first hexaketide precursor through the R-domain. The tazA product then undergoes reduction on its terminal ketone and the following pyran-ring formation by yet undetermined enzyme(s). Dehydration and enoyl reduction, possibly involving the trans-enoyl reductase tazE leads to the next intermediate. TazD is predicted as an acetyltransferase and might catalyze the acetylation steps leading to the synthesis of azaterrilone A. Azaterrilone A is not the final product of the taz pathway and both the highly reducing polyketide synthase tazB and the dual enzyme tazHJ catalyze late steps of the pathway, leading to the production of the 2 final stereoisomers that contain additional polyketide modification whose structures have still to be determined. The polypeptide is Short chain dehydrogenase tazN (Aspergillus terreus (strain NIH 2624 / FGSC A1156)).